The following is a 180-amino-acid chain: Large ribosomal subunit protein uL6 (180 aa).

It belongs to the universal ribosomal protein uL6 family. In terms of assembly, part of the 50S ribosomal subunit.

Functionally, this protein binds to the 23S rRNA, and is important in its secondary structure. It is located near the subunit interface in the base of the L7/L12 stalk, and near the tRNA binding site of the peptidyltransferase center. The chain is Large ribosomal subunit protein uL6 from Christiangramia forsetii (strain DSM 17595 / CGMCC 1.15422 / KT0803) (Gramella forsetii).